Here is a 146-residue protein sequence, read N- to C-terminus: Globin (146 aa).

The residue at position 1 (A1) is an N-acetylalanine. In terms of domain architecture, Globin spans A1 to S146. 2 residues coordinate heme b: H65 and H97.

It belongs to the globin family. Homodimer.

In Buccinum undatum (Common whelk), this protein is Globin.